Consider the following 217-residue polypeptide: DNA-binding transcriptional activator DevR/DosR (217 aa).

In terms of domain architecture, Response regulatory spans 3–119 (KVFLVDDHEV…ELARAVKDVG (117 aa)). D54 bears the 4-aspartylphosphate mark. In terms of domain architecture, HTH luxR-type spans 143–208 (KQDPLSGLTD…QAAVFATELK (66 aa)). The segment at residues 167–186 (NKQIADRMFLAEKTVKNYVS) is a DNA-binding region (H-T-H motif). Phosphothreonine; by PknH is present on residues T198 and T205.

Homodimer. Interacts with NarL. Post-translationally, phosphorylated on Asp-54 by both DevS (DosS) and DosT. Phosphorylated on Thr-198 and Thr-205 by PknH, which enhances DevR dimerization. Aspartate phosphorylation and threonine phosphorylation cooperatively enhance DevR binding to DNA.

Its subcellular location is the cytoplasm. The protein resides in the host cytoplasmic vesicle. It is found in the host phagosome. Its function is as follows. Member of the two-component regulatory system DevR/DevS (also called DosR/DosS) involved in onset of the dormancy response. Regulates an approximately 48-member regulon. When phosphorylated binds and activates the promoter of DevR regulon genes in response to hypoxia. The presence of target DNA increases stability of phospho-DevR in vitro. Activates its own transcription under hypoxic but not aerobic conditions, probably binds as a dimer to tandem binding sites within the devR and hspX promoters. Accepts a phosphate group from DevS (DosS) and from DosT. Does not regulate transcription of dosT. This is DNA-binding transcriptional activator DevR/DosR from Mycobacterium tuberculosis (strain ATCC 25618 / H37Rv).